A 751-amino-acid chain; its full sequence is Glutathione biosynthesis bifunctional protein GshAB (751 aa).

The tract at residues 1–336 (MELDAVGKAI…QADQLTRQVL (336 aa)) is glutamate--cysteine ligase.

It in the N-terminal section; belongs to the glutamate--cysteine ligase type 1 family. Type 2 subfamily. In terms of assembly, monomer.

The catalysed reaction is L-cysteine + L-glutamate + ATP = gamma-L-glutamyl-L-cysteine + ADP + phosphate + H(+). It catalyses the reaction gamma-L-glutamyl-L-cysteine + glycine + ATP = glutathione + ADP + phosphate + H(+). The protein operates within sulfur metabolism; glutathione biosynthesis; glutathione from L-cysteine and L-glutamate: step 1/2. Its pathway is sulfur metabolism; glutathione biosynthesis; glutathione from L-cysteine and L-glutamate: step 2/2. Functionally, synthesizes glutathione from L-glutamate and L-cysteine via gamma-L-glutamyl-L-cysteine. The chain is Glutathione biosynthesis bifunctional protein GshAB (gshAB) from Lactiplantibacillus plantarum (strain ATCC BAA-793 / NCIMB 8826 / WCFS1) (Lactobacillus plantarum).